Here is a 234-residue protein sequence, read N- to C-terminus: Small ribosomal subunit protein uS2c (234 aa).

It belongs to the universal ribosomal protein uS2 family.

It localises to the plastid. It is found in the chloroplast. The chain is Small ribosomal subunit protein uS2c (rps2) from Pinus thunbergii (Japanese black pine).